The following is an 872-amino-acid chain: Alanine--tRNA ligase (872 aa).

His-567, His-571, Cys-669, and His-673 together coordinate Zn(2+).

This sequence belongs to the class-II aminoacyl-tRNA synthetase family. Zn(2+) serves as cofactor.

Its subcellular location is the cytoplasm. It catalyses the reaction tRNA(Ala) + L-alanine + ATP = L-alanyl-tRNA(Ala) + AMP + diphosphate. In terms of biological role, catalyzes the attachment of alanine to tRNA(Ala) in a two-step reaction: alanine is first activated by ATP to form Ala-AMP and then transferred to the acceptor end of tRNA(Ala). Also edits incorrectly charged Ser-tRNA(Ala) and Gly-tRNA(Ala) via its editing domain. In Streptococcus agalactiae serotype V (strain ATCC BAA-611 / 2603 V/R), this protein is Alanine--tRNA ligase.